The primary structure comprises 692 residues: Elongation factor G (692 aa).

The 275-residue stretch at 8–282 folds into the tr-type G domain; that stretch reads ENTRNIGIMA…AVIDYLPSPL (275 aa). GTP contacts are provided by residues 17 to 24, 81 to 85, and 135 to 138; these read AHIDAGKT, DTPGH, and NKMD.

It belongs to the TRAFAC class translation factor GTPase superfamily. Classic translation factor GTPase family. EF-G/EF-2 subfamily.

The protein resides in the cytoplasm. In terms of biological role, catalyzes the GTP-dependent ribosomal translocation step during translation elongation. During this step, the ribosome changes from the pre-translocational (PRE) to the post-translocational (POST) state as the newly formed A-site-bound peptidyl-tRNA and P-site-bound deacylated tRNA move to the P and E sites, respectively. Catalyzes the coordinated movement of the two tRNA molecules, the mRNA and conformational changes in the ribosome. This chain is Elongation factor G, found in Bacillus cereus (strain AH820).